A 150-amino-acid polypeptide reads, in one-letter code: Globin-1 (150 aa).

A Globin domain is found at 11-150; sequence PLSDAEKNKI…MICILLSSAY (140 aa). Residues H74 and H106 each contribute to the heme b site.

Belongs to the globin family. Monomer.

This chain is Globin-1, found in Mordacia mordax (Southern hemisphere lamprey).